The sequence spans 357 residues: Peptide chain release factor 1 (357 aa).

At Gln234 the chain carries N5-methylglutamine. Positions 249–308 (PSGVEVSCQDEKSQHKNRSKAMRVLRSRVYEKKREEQQAEREEARRSMVGSGDRSAKIRT) are disordered. Residues 263–274 (HKNRSKAMRVLR) show a composition bias toward basic residues. Residues 276–294 (RVYEKKREEQQAEREEARR) are compositionally biased toward basic and acidic residues.

It belongs to the prokaryotic/mitochondrial release factor family. Methylated by PrmC. Methylation increases the termination efficiency of RF1.

It localises to the cytoplasm. Functionally, peptide chain release factor 1 directs the termination of translation in response to the peptide chain termination codons UAG and UAA. The sequence is that of Peptide chain release factor 1 from Salinibacter ruber (strain DSM 13855 / M31).